Here is a 424-residue protein sequence, read N- to C-terminus: Probable methyltransferase EP424R (424 aa).

The region spanning 104–316 is the Adrift-type SAM-dependent 2'-O-MTase domain; it reads QIVTNAWLKM…TYIVGKNRLR (213 aa). 2 residues coordinate S-adenosyl-L-methionine: Gly136 and Asp229. Lys269 serves as the catalytic Proton acceptor.

The protein resides in the virion. This chain is Probable methyltransferase EP424R, found in African swine fever virus (strain Badajoz 1971 Vero-adapted) (Ba71V).